Reading from the N-terminus, the 398-residue chain is Phosphoglycerate kinase (398 aa).

Substrate is bound by residues 21–23, arginine 36, 59–62, arginine 119, and arginine 157; these read DFN and HLGR. Residues lysine 208, glycine 296, glutamate 327, and 354–357 each bind ATP; that span reads GGDS.

Belongs to the phosphoglycerate kinase family. Monomer.

It localises to the cytoplasm. The enzyme catalyses (2R)-3-phosphoglycerate + ATP = (2R)-3-phospho-glyceroyl phosphate + ADP. It functions in the pathway carbohydrate degradation; glycolysis; pyruvate from D-glyceraldehyde 3-phosphate: step 2/5. The chain is Phosphoglycerate kinase from Streptococcus sanguinis (strain SK36).